The primary structure comprises 327 residues: Aspartate--ammonia ligase (327 aa).

Belongs to the class-II aminoacyl-tRNA synthetase family. AsnA subfamily.

The protein localises to the cytoplasm. The enzyme catalyses L-aspartate + NH4(+) + ATP = L-asparagine + AMP + diphosphate + H(+). It functions in the pathway amino-acid biosynthesis; L-asparagine biosynthesis; L-asparagine from L-aspartate (ammonia route): step 1/1. In Bacillus anthracis (strain A0248), this protein is Aspartate--ammonia ligase.